A 227-amino-acid polypeptide reads, in one-letter code: MQLCVALDLEKKEDNLSLLQELKGLDLWAKVGLRSFIRDGAVFLDEIRKIDGNFKIFLDLKLYDIPYTMANAALECAKLEVDMLTVHLSSAKSALTILMQRLNALKKRPLIMGVSALTSFSEEEFLMVYNAPLKTQAIKLSAMGKESGIDGVVCSVFESLAVKEALGKDFLTLTPGIRLDKSDKEDQERVANAKEAKQNLSDFIVVGRPIYHAKEPREVVLELLKDC.

Substrate contacts are provided by residues Asp8, Lys30, 59–68 (DLKLYDIPYT), Thr118, Arg178, Gln187, Gly207, and Arg208. Lys61 acts as the Proton donor in catalysis.

It belongs to the OMP decarboxylase family. Type 1 subfamily. Homodimer.

The enzyme catalyses orotidine 5'-phosphate + H(+) = UMP + CO2. It functions in the pathway pyrimidine metabolism; UMP biosynthesis via de novo pathway; UMP from orotate: step 2/2. Catalyzes the decarboxylation of orotidine 5'-monophosphate (OMP) to uridine 5'-monophosphate (UMP). This Helicobacter pylori (strain P12) protein is Orotidine 5'-phosphate decarboxylase.